The following is a 78-amino-acid chain: MVTNLYQNMRANALADAELRRKAADELTCMTARINRGETIPEPVKQLPVMGGRPLNRAQALAKIAEIKAKFGLKGASV.

This sequence belongs to the phage P protein family.

The chain is Putative protein PeaD (peaD) from Escherichia coli (strain K12).